A 249-amino-acid chain; its full sequence is MRYLNTKNIIAAGVLLSCMSSIAWGAIIPDRTRIIMNESDKGEALKLTNQSKNLPYLAQTWIEDTKGNKSRDFIVTVPPMVRLNPSEQIQIRMITQEKIAQLPKDRETLFYFNVREIPPKTDKKNVMQVTMQHALKLFWRPKAIELEDDGVMTYEKVEIIRRNDGSIRFNNKMPYHVTLGYIGTNGVTMLPQTQSLMVTPFSYANTQFKNVPSTFQVGYINDFGGLSFYEINCPVVNNICNISVANRDQ.

Positions 1-25 (MRYLNTKNIIAAGVLLSCMSSIAWG) are cleaved as a signal peptide.

It belongs to the periplasmic pilus chaperone family.

The protein resides in the periplasm. Functionally, could be required for the biogenesis of a putative fimbria. This is an uncharacterized protein from Escherichia coli (strain K12).